Here is a 297-residue protein sequence, read N- to C-terminus: Homeobox protein HMX3 (297 aa).

Disordered regions lie at residues 24-43 and 96-172; these read NSDS…KAGL and AAQK…RKKK. Composition is skewed to basic and acidic residues over residues 109–123 and 145–166; these read TDRD…SDPD and EDGK…ADKK. A DNA-binding region (homeobox) is located at residues 170-229; the sequence is KKKTRTVFSRSQVFQLESTFDMKRYLSSSERAGLAASLHLTETQVKIWFQNRRNKWKRQL.

The protein belongs to the HMX homeobox family. As to expression, expressed in the ear placode and vesicle and in cells forming the vestibulo-acoustic ganglion. Also expressed in the lateral line.

The protein localises to the nucleus. Functionally, transcription factor involved in specification of neuronal cell types and which is required for inner ear and hypothalamus development. Binds to the 5'-CAAGTG-3' core sequence. The sequence is that of Homeobox protein HMX3 (hmx3) from Danio rerio (Zebrafish).